The sequence spans 314 residues: Ferric-anguibactin transport system permease protein FatD (314 aa).

10 helical membrane-spanning segments follow: residues 1 to 21 (MTFR…FFGA), 49 to 69 (VALI…QHIV), 76 to 96 (PGTT…IVML), 103 to 123 (ERMF…IAII), 132 to 152 (ALVP…AEFY), 180 to 200 (IIFL…RFTV), 207 to 226 (IASN…LILV), 230 to 252 (VAVT…NLVA), 265 to 285 (IVAL…RVVL), and 288 to 308 (FEVP…LAFL).

The protein belongs to the binding-protein-dependent transport system permease family. FecCD subfamily. As to quaternary structure, part of an iron transport system composed of the outer membrane receptor FatA, the periplasmic binding protein FatB and the inner membrane proteins FatC and FatD.

Its subcellular location is the cell inner membrane. Functionally, involved in the uptake of iron in complex with the siderophore anguibactin. Responsible for the translocation of ferric-anguibactin across the cytoplasmic membrane. This is Ferric-anguibactin transport system permease protein FatD from Vibrio anguillarum (strain ATCC 68554 / 775) (Listonella anguillarum).